A 418-amino-acid polypeptide reads, in one-letter code: Putative ion-transport protein YfeO (418 aa).

The next 12 membrane-spanning stretches (helical) occupy residues 10–30 (LLLSLPAVAIGIASSLILIVV), 54–74 (DSPLWIIGVLTLTGIAVGLVI), 99–119 (ALPGLIVALILGLAGGVSLGP), 120–140 (EHPIMTVNIALAVAIGARLLP), 149–169 (ILASAGTIGALFGTPVAAALI), 186–206 (LFAPLMAAAAGALTTGLFFHP), 223–243 (ILSGAIVAAIAIAAGMVAVWC), 258–278 (VLVLGIGGFILGILGVIGGPV), 300–320 (DYFLLAVIKLAALVVAAASGF), 322–342 (GGRIFPAVFVGVALGLMLHEH), 343–363 (VPAVPAAITVSCAILGIVLVV), and 371–391 (LFMAAVVVPNTTLLPLLCIVM).

The protein belongs to the chloride channel (TC 2.A.49) family.

The protein resides in the cell membrane. This Escherichia coli O8 (strain IAI1) protein is Putative ion-transport protein YfeO.